The sequence spans 54 residues: MQLPATGTEHERTEKDTIIISNLRKIVEKRYAENNREKQKSGKLRELRRGFKTF.

Residues 34 to 54 (NNREKQKSGKLRELRRGFKTF) are disordered.

This is an uncharacterized protein from Acidianus two-tailed virus (ATV).